A 360-amino-acid chain; its full sequence is DNA replication and repair protein RecF (360 aa).

30–37 (GDNAQGKT) contacts ATP.

This sequence belongs to the RecF family.

Its subcellular location is the cytoplasm. Functionally, the RecF protein is involved in DNA metabolism; it is required for DNA replication and normal SOS inducibility. RecF binds preferentially to single-stranded, linear DNA. It also seems to bind ATP. In Lachnoclostridium phytofermentans (strain ATCC 700394 / DSM 18823 / ISDg) (Clostridium phytofermentans), this protein is DNA replication and repair protein RecF.